Consider the following 162-residue polypeptide: Corticoliberin-2 (162 aa).

Positions 1–24 are cleaved as a signal peptide; that stretch reads MRLNFLVTTMALLVAFPPPYECRA. The propeptide occupies 25–119; that stretch reads IDSSSNQPVT…ALDSEERERR (95 aa). Residues 57–79 form a disordered region; it reads LGNRNKNSPRSPPDTYPEASQYS. Phe-160 is subject to Phenylalanine amide.

Belongs to the sauvagine/corticotropin-releasing factor/urotensin I family.

Its subcellular location is the secreted. This hormone from hypothalamus regulates the release of corticotropin from pituitary gland. This is Corticoliberin-2 (crf2) from Catostomus commersonii (White sucker).